A 253-amino-acid polypeptide reads, in one-letter code: MQKLIMANWKMNGNSTSIKELCSGISQVQYDTSRVAIAVFPSSVYVKEVISQLPEKVGVGLQNITFYDDGAYTGEISARMLEDIGCDYLLIGHSERRSLFAESDEDVFKKLNKIIDTTITPVVCIGESLDDRQSGKLKQVLATQLSLILENLSVEQLAKVVIAYEPVWAIGTGVVASLEQIQETHQFIRSLLAKVDEKLAKNIKIVYGGSLKAENAKDILSLPNVDGGLIGGASLKAVEFNEIINQANKICTE.

8–10 (NWK) contacts substrate. H93 functions as the Electrophile in the catalytic mechanism. E165 serves as the catalytic Proton acceptor. Substrate-binding positions include G171, S210, and 231–232 (GG).

It belongs to the triosephosphate isomerase family. Homodimer.

It localises to the cytoplasm. The catalysed reaction is D-glyceraldehyde 3-phosphate = dihydroxyacetone phosphate. It functions in the pathway carbohydrate biosynthesis; gluconeogenesis. The protein operates within carbohydrate degradation; glycolysis; D-glyceraldehyde 3-phosphate from glycerone phosphate: step 1/1. In terms of biological role, involved in the gluconeogenesis. Catalyzes stereospecifically the conversion of dihydroxyacetone phosphate (DHAP) to D-glyceraldehyde-3-phosphate (G3P). The sequence is that of Triosephosphate isomerase from Francisella tularensis subsp. mediasiatica (strain FSC147).